The sequence spans 249 residues: Ubiquinone biosynthesis protein COQ4 homolog, mitochondrial (249 aa).

The Zn(2+) site is built by histidine 134, aspartate 135, histidine 138, and glutamate 150.

It belongs to the COQ4 family. Component of a multi-subunit COQ enzyme complex. The cofactor is Zn(2+).

The protein localises to the mitochondrion inner membrane. The enzyme catalyses a 4-hydroxy-3-methoxy-5-(all-trans-polyprenyl)benzoate + H(+) = a 2-methoxy-6-(all-trans-polyprenyl)phenol + CO2. The protein operates within cofactor biosynthesis; ubiquinone biosynthesis. In terms of biological role, lyase that catalyzes the C1-decarboxylation of 4-hydroxy-3-methoxy-5-(all-trans-polyprenyl)benzoic acid into 2-methoxy-6-(all-trans-polyprenyl)phenol during ubiquinone biosynthesis. This is Ubiquinone biosynthesis protein COQ4 homolog, mitochondrial from Trypanosoma brucei brucei (strain 927/4 GUTat10.1).